The primary structure comprises 337 residues: Eukaryotic translation initiation factor 3 subunit H (337 aa).

One can recognise an MPN domain in the interval 21–153 (VQCDGLAVMK…LKAYRLTPQA (133 aa)).

Belongs to the eIF-3 subunit H family. As to quaternary structure, component of the eukaryotic translation initiation factor 3 (eIF-3) complex.

Its subcellular location is the cytoplasm. Component of the eukaryotic translation initiation factor 3 (eIF-3) complex, which is involved in protein synthesis of a specialized repertoire of mRNAs and, together with other initiation factors, stimulates binding of mRNA and methionyl-tRNAi to the 40S ribosome. The eIF-3 complex specifically targets and initiates translation of a subset of mRNAs involved in cell proliferation. The protein is Eukaryotic translation initiation factor 3 subunit H of Bombyx mori (Silk moth).